The primary structure comprises 567 residues: Galectin-3-binding protein A (567 aa).

The N-terminal stretch at 1-16 (MIMYIIWALLFIPVSA) is a signal peptide. Positions 34-133 (VRLVGGLPSS…HQEDAGVVCD (100 aa)) constitute an SRCR domain. 3 disulfide bridges follow: Cys58/Cys122, Cys71/Cys132, and Cys102/Cys112. N-linked (GlcNAc...) asparagine glycosylation is found at Asn137, Asn197, Asn200, and Asn204. Residues 272 to 374 (PVSMYEYGLR…IPVDKLYDIQ (103 aa)) form the BACK domain. N-linked (GlcNAc...) asparagine glycosylation is found at Asn412, Asn432, and Asn543.

The protein resides in the secreted. Its subcellular location is the extracellular space. The protein localises to the extracellular matrix. Promotes integrin-mediated cell adhesion. This chain is Galectin-3-binding protein A (lgals3bpa), found in Danio rerio (Zebrafish).